Consider the following 194-residue polypeptide: 7-methyl-GTP pyrophosphatase (194 aa).

The active-site Proton acceptor is Asp67.

Belongs to the Maf family. YceF subfamily. A divalent metal cation is required as a cofactor.

It is found in the cytoplasm. It carries out the reaction N(7)-methyl-GTP + H2O = N(7)-methyl-GMP + diphosphate + H(+). Its function is as follows. Nucleoside triphosphate pyrophosphatase that hydrolyzes 7-methyl-GTP (m(7)GTP). May have a dual role in cell division arrest and in preventing the incorporation of modified nucleotides into cellular nucleic acids. This is 7-methyl-GTP pyrophosphatase from Pseudoalteromonas atlantica (strain T6c / ATCC BAA-1087).